Here is a 525-residue protein sequence, read N- to C-terminus: Cytochrome P450 4V2 (525 aa).

Residues 13–33 (LLLWGAASAVSLAGASLVLSL) traverse the membrane as a helical segment. Heme contacts are provided by Glu329 and Cys467.

It belongs to the cytochrome P450 family. It depends on heme as a cofactor.

The protein resides in the endoplasmic reticulum membrane. The enzyme catalyses dodecanoate + reduced [NADPH--hemoprotein reductase] + O2 = 12-hydroxydodecanoate + oxidized [NADPH--hemoprotein reductase] + H2O + H(+). The catalysed reaction is tetradecanoate + reduced [NADPH--hemoprotein reductase] + O2 = 14-hydroxytetradecanoate + oxidized [NADPH--hemoprotein reductase] + H2O + H(+). It catalyses the reaction hexadecanoate + reduced [NADPH--hemoprotein reductase] + O2 = 16-hydroxyhexadecanoate + oxidized [NADPH--hemoprotein reductase] + H2O + H(+). It carries out the reaction (5Z,8Z,11Z,14Z,17Z)-eicosapentaenoate + reduced [NADPH--hemoprotein reductase] + O2 = 20-hydroxy-(5Z,8Z,11Z,14Z,17Z)-eicosapentaenoate + oxidized [NADPH--hemoprotein reductase] + H2O + H(+). The enzyme catalyses (4Z,7Z,10Z,13Z,16Z,19Z)-docosahexaenoate + reduced [NADPH--hemoprotein reductase] + O2 = 22-hydroxy-(4Z,7Z,10Z,13Z,16Z,19Z)-docosahexaenoate + oxidized [NADPH--hemoprotein reductase] + H2O + H(+). It participates in lipid metabolism; fatty acid metabolism. With respect to regulation, inhibited by N-hydroxy-N'-(4-n-butyl-2-methylphenyl formamidine)(HET0016) with an IC(50) of 38 nM. Its function is as follows. A cytochrome P450 monooxygenase involved in fatty acid metabolism in the eye. Catalyzes the omega-hydroxylation of polyunsaturated fatty acids (PUFAs) docosahexaenoate (DHA) and its precursor eicosapentaenoate (EPA), and may contribute to the homeostasis of these retinal PUFAs. Omega hydroxylates saturated fatty acids such as laurate, myristate and palmitate, the catalytic efficiency decreasing in the following order: myristate &gt; laurate &gt; palmitate (C14&gt;C12&gt;C16). Mechanistically, uses molecular oxygen inserting one oxygen atom into a substrate, and reducing the second into a water molecule, with two electrons provided by NADPH via cytochrome P450 reductase (CPR; NADPH-ferrihemoprotein reductase). The sequence is that of Cytochrome P450 4V2 (CYP4V2) from Pongo abelii (Sumatran orangutan).